Reading from the N-terminus, the 313-residue chain is Aspartate carbamoyltransferase catalytic subunit (313 aa).

Carbamoyl phosphate contacts are provided by Arg-59 and Thr-60. Lys-87 is an L-aspartate binding site. 3 residues coordinate carbamoyl phosphate: Arg-109, His-137, and Gln-140. L-aspartate-binding residues include Arg-170 and Arg-224. 2 residues coordinate carbamoyl phosphate: Gly-265 and Pro-266.

Belongs to the aspartate/ornithine carbamoyltransferase superfamily. ATCase family. As to quaternary structure, heterododecamer (2C3:3R2) of six catalytic PyrB chains organized as two trimers (C3), and six regulatory PyrI chains organized as three dimers (R2).

The catalysed reaction is carbamoyl phosphate + L-aspartate = N-carbamoyl-L-aspartate + phosphate + H(+). It functions in the pathway pyrimidine metabolism; UMP biosynthesis via de novo pathway; (S)-dihydroorotate from bicarbonate: step 2/3. Functionally, catalyzes the condensation of carbamoyl phosphate and aspartate to form carbamoyl aspartate and inorganic phosphate, the committed step in the de novo pyrimidine nucleotide biosynthesis pathway. The chain is Aspartate carbamoyltransferase catalytic subunit from Sinorhizobium medicae (strain WSM419) (Ensifer medicae).